The primary structure comprises 299 residues: MKPDAHHVKQFLLRLQDDICQTLSAVDGANFIEDSWRREAGGGGRSRVLRNGGIFEQAGVNFSHVHGDAMPASATAHRPELAGRSFEAMGVSLVVHPHNPYIPTSHANVRFFIAEKPGADPVWWFGGGFDLTPYYGFEEDAVHWHRTARDLCQPFGDDVYPRYKKWCDDYFFLKHRNEQRGIGGLFFDDLNTPDFDHCFAFMQAVGNGYTEAYLPIVERRKAMVWGERERNFQLYRRGRYVEFNLVWDRGTLFGLQTGGRTESILMSMPPLVRWEYDWQPEAGSPEAALSEFIQVRDWI.

S92 provides a ligand contact to substrate. Positions 96 and 106 each coordinate a divalent metal cation. H106 serves as the catalytic Proton donor. 108–110 serves as a coordination point for substrate; it reads NVR. H145 and H175 together coordinate a divalent metal cation. Positions 240–275 are important for dimerization; sequence YVEFNLVWDRGTLFGLQTGGRTESILMSMPPLVRWE. Residue 258–260 coordinates substrate; the sequence is GGR.

The protein belongs to the aerobic coproporphyrinogen-III oxidase family. Homodimer. A divalent metal cation is required as a cofactor.

The protein resides in the cytoplasm. It catalyses the reaction coproporphyrinogen III + O2 + 2 H(+) = protoporphyrinogen IX + 2 CO2 + 2 H2O. Its pathway is porphyrin-containing compound metabolism; protoporphyrin-IX biosynthesis; protoporphyrinogen-IX from coproporphyrinogen-III (O2 route): step 1/1. In terms of biological role, involved in the heme biosynthesis. Catalyzes the aerobic oxidative decarboxylation of propionate groups of rings A and B of coproporphyrinogen-III to yield the vinyl groups in protoporphyrinogen-IX. The sequence is that of Oxygen-dependent coproporphyrinogen-III oxidase from Salmonella typhi.